Reading from the N-terminus, the 160-residue chain is Nuclear transcription factor Y subunit B-5 (160 aa).

Residues 56 to 62 (LPIANVG) mediate DNA binding. The interval 83 to 94 (MQECVSEFISFV) is subunit association domain (SAD).

The protein belongs to the NFYB/HAP3 subunit family. As to quaternary structure, heterotrimeric transcription factor composed of three components, NF-YA, NF-YB and NF-YC. NF-YB and NF-YC must interact and dimerize for NF-YA association and DNA binding. Expressed in flowers and siliques.

It localises to the nucleus. Its function is as follows. Component of the NF-Y/HAP transcription factor complex. The NF-Y complex stimulates the transcription of various genes by recognizing and binding to a CCAAT motif in promoters. The chain is Nuclear transcription factor Y subunit B-5 (NFYB5) from Arabidopsis thaliana (Mouse-ear cress).